We begin with the raw amino-acid sequence, 292 residues long: Formamidopyrimidine-DNA glycosylase (292 aa).

Pro-2 serves as the catalytic Schiff-base intermediate with DNA. Catalysis depends on Glu-3, which acts as the Proton donor. The active-site Proton donor; for beta-elimination activity is Lys-60. DNA contacts are provided by His-109, Arg-128, and Lys-173. An FPG-type zinc finger spans residues 258 to 292; sequence NVYRRTGKKCRQCKNLIERQKISGRSTHWCRKCQK. Catalysis depends on Arg-282, which acts as the Proton donor; for delta-elimination activity.

Belongs to the FPG family. As to quaternary structure, monomer. The cofactor is Zn(2+).

It catalyses the reaction Hydrolysis of DNA containing ring-opened 7-methylguanine residues, releasing 2,6-diamino-4-hydroxy-5-(N-methyl)formamidopyrimidine.. It carries out the reaction 2'-deoxyribonucleotide-(2'-deoxyribose 5'-phosphate)-2'-deoxyribonucleotide-DNA = a 3'-end 2'-deoxyribonucleotide-(2,3-dehydro-2,3-deoxyribose 5'-phosphate)-DNA + a 5'-end 5'-phospho-2'-deoxyribonucleoside-DNA + H(+). In terms of biological role, involved in base excision repair of DNA damaged by oxidation or by mutagenic agents. Acts as a DNA glycosylase that recognizes and removes damaged bases. Has a preference for oxidized purines, such as 7,8-dihydro-8-oxoguanine (8-oxoG). Has AP (apurinic/apyrimidinic) lyase activity and introduces nicks in the DNA strand. Cleaves the DNA backbone by beta-delta elimination to generate a single-strand break at the site of the removed base with both 3'- and 5'-phosphates. This Prochlorococcus marinus subsp. pastoris (strain CCMP1986 / NIES-2087 / MED4) protein is Formamidopyrimidine-DNA glycosylase.